Reading from the N-terminus, the 402-residue chain is Type II NADH:quinone oxidoreductase (402 aa).

Residues 12–16 (GAGYA), 39–40 (NK), and valine 83 each bind FAD. Glutamate 172 is a catalytic residue. FAD contacts are provided by residues aspartate 302, 319–320 (AQ), and lysine 379.

It belongs to the NADH dehydrogenase family. Requires FAD as cofactor.

It is found in the cell membrane. The catalysed reaction is a quinone + NADH + H(+) = a quinol + NAD(+). Its function is as follows. Alternative, nonproton pumping NADH:quinone oxidoreductase that delivers electrons to the respiratory chain by oxidation of NADH and reduction of quinones, and contributes to the regeneration of NAD(+). The sequence is that of Type II NADH:quinone oxidoreductase from Staphylococcus epidermidis (strain ATCC 12228 / FDA PCI 1200).